The following is a 490-amino-acid chain: MSVFLCFLCLLPLILIFLKNLKPSKWKLPPGPKKLPIIGNLHQRRELHPRNSRNLSEKYGPIVFLRYGFVPVVVISSKEAAEEVLKTHDLECCSRPETVGTRAISYNFKDIGFAPYGEDWRTMRKLSVVELFSSKKLQSFRYIREEENDLCVKKLSDLASRRSLVNLEKTLFTLVGSIVCRIGFGINLRECEFVDEDSIDDLVHKSEDVIRNSIFSDFFPGLMGRLIEWIFSERKRLNRLYSEVDTFFQNILDDHLKPGRESSDIIDVMIDMMKKQEKEGDSFKFTTDHLKGMISDIFLAGVGTSSTTLIWAMTELIRNPRVMKKVQDEIRTTLGDKKERITEEDLNQLHYFKLMVKEIFRLHPAAPLLLPRETLSHVKIQGYDIPAKTQIMINAYAIARDPKLWTNPDEFNPDRFLDSSIDYRGLNFELLPFGSGRRICPGMTMGIAIVELGLLNLLYFFDWGLPEKEEAKEIITGNEVALDLVQVFLH.

A helical membrane pass occupies residues methionine 1–leucine 21. Cysteine 440 is a binding site for heme.

This sequence belongs to the cytochrome P450 family. Heme is required as a cofactor.

It localises to the membrane. In Arabidopsis thaliana (Mouse-ear cress), this protein is Cytochrome P450 71B28 (CYP71B28).